A 529-amino-acid polypeptide reads, in one-letter code: uncharacterized protein (529 aa).

Residues 26–58 constitute a DNA-binding region (zn(2)-C6 fungal-type); that stretch reads CDSCRKQKTRCLAGSVEDENRACLRCRSLNMDC.

Its subcellular location is the nucleus. This is an uncharacterized protein from Schizosaccharomyces pombe (strain 972 / ATCC 24843) (Fission yeast).